We begin with the raw amino-acid sequence, 323 residues long: Elongation factor P--(R)-beta-lysine ligase (323 aa).

A substrate-binding site is contributed by 74–76; that stretch reads SPE. ATP is bound by residues 98–100 and N107; that span reads RNE. Substrate is bound at residue Y116. ATP is bound at residue 242–243; sequence EL. E249 lines the substrate pocket. ATP is bound at residue G298.

The protein belongs to the class-II aminoacyl-tRNA synthetase family. EpmA subfamily. As to quaternary structure, homodimer.

It catalyses the reaction D-beta-lysine + L-lysyl-[protein] + ATP = N(6)-((3R)-3,6-diaminohexanoyl)-L-lysyl-[protein] + AMP + diphosphate + H(+). In terms of biological role, with EpmB is involved in the beta-lysylation step of the post-translational modification of translation elongation factor P (EF-P). Catalyzes the ATP-dependent activation of (R)-beta-lysine produced by EpmB, forming a lysyl-adenylate, from which the beta-lysyl moiety is then transferred to the epsilon-amino group of a conserved specific lysine residue in EF-P. This is Elongation factor P--(R)-beta-lysine ligase from Vibrio atlanticus (strain LGP32) (Vibrio splendidus (strain Mel32)).